Here is a 609-residue protein sequence, read N- to C-terminus: Beta-(1--&gt;2)glucan export ATP-binding/permease protein NdvA (609 aa).

One can recognise an ABC transmembrane type-1 domain in the interval 21–311 (GWILAGANLL…VVSFINSVFM (291 aa)). The next 6 membrane-spanning stretches (helical) occupy residues 22-42 (WILAGANLLLAGAQFAEPVLF), 68-88 (LLAVWAAFGLFTILCGVTVAL), 146-166 (EHFAAMMSLVVLLPLSLYINW), 167-187 (RLAILLFALCIVFTMLTTLVV), 248-268 (WWAVVTVMTRASTTITILAIF), and 285-305 (IVMFVSFATMLIQRLEQVVSF). Positions 345 to 579 (VEFNDVSFSY…GGHFAQLAKA (235 aa)) constitute an ABC transporter domain. Residue 378–385 (GPTGAGKS) coordinates ATP.

The protein belongs to the ABC transporter superfamily. Beta-(1--&gt;2)glucan exporter (TC 3.A.1.108.1) family. As to quaternary structure, homodimer.

It localises to the cell inner membrane. The catalysed reaction is [(1-&gt;2)-beta-D-glucosyl](n)(in) + ATP + H2O = [(1-&gt;2)-beta-D-glucosyl](n)(out) + ADP + phosphate + H(+). In terms of biological role, involved in beta-(1--&gt;2)glucan export. Transmembrane domains (TMD) form a pore in the inner membrane and the ATP-binding domain (NBD) is responsible for energy generation. The sequence is that of Beta-(1--&gt;2)glucan export ATP-binding/permease protein NdvA from Nitrobacter winogradskyi (strain ATCC 25391 / DSM 10237 / CIP 104748 / NCIMB 11846 / Nb-255).